We begin with the raw amino-acid sequence, 430 residues long: Enolase (430 aa).

A (2R)-2-phosphoglycerate-binding site is contributed by Q163. The active-site Proton donor is the E205. Positions 242, 287, and 314 each coordinate Mg(2+). 4 residues coordinate (2R)-2-phosphoglycerate: K339, R368, S369, and K390. K339 functions as the Proton acceptor in the catalytic mechanism.

It belongs to the enolase family. It depends on Mg(2+) as a cofactor.

It is found in the cytoplasm. The protein localises to the secreted. Its subcellular location is the cell surface. It catalyses the reaction (2R)-2-phosphoglycerate = phosphoenolpyruvate + H2O. It participates in carbohydrate degradation; glycolysis; pyruvate from D-glyceraldehyde 3-phosphate: step 4/5. In terms of biological role, catalyzes the reversible conversion of 2-phosphoglycerate (2-PG) into phosphoenolpyruvate (PEP). It is essential for the degradation of carbohydrates via glycolysis. This chain is Enolase, found in Bacillus licheniformis (strain ATCC 14580 / DSM 13 / JCM 2505 / CCUG 7422 / NBRC 12200 / NCIMB 9375 / NCTC 10341 / NRRL NRS-1264 / Gibson 46).